The following is a 504-amino-acid chain: GTPase Obg (504 aa).

The Obg domain maps to 2–159 (SQFVDRVVLH…KDVTLELKSM (158 aa)). Residues 68–88 (AERGNNGAGDDRHGARGKDLT) form a disordered region. In terms of domain architecture, OBG-type G spans 160–340 (ADVGLVGFPS…LRFALMDIVR (181 aa)). Residues 166–173 (GFPSAGKS), 191–195 (FTTLA), 212–215 (DVPG), 292–295 (NKMD), and 321–323 (STV) each bind GTP. Ser173 and Thr193 together coordinate Mg(2+). Positions 364–444 (KRKGRFADFE…IGGITFEWDP (81 aa)) constitute an OCT domain. Residues 449–481 (GVDQTPAYGRGKDRRLEQTDRVTAEQRKRASQA) are disordered. Residues 458-476 (RGKDRRLEQTDRVTAEQRK) are compositionally biased toward basic and acidic residues.

This sequence belongs to the TRAFAC class OBG-HflX-like GTPase superfamily. OBG GTPase family. In terms of assembly, monomer. It depends on Mg(2+) as a cofactor.

Its subcellular location is the cytoplasm. An essential GTPase which binds GTP, GDP and possibly (p)ppGpp with moderate affinity, with high nucleotide exchange rates and a fairly low GTP hydrolysis rate. Plays a role in control of the cell cycle, stress response, ribosome biogenesis and in those bacteria that undergo differentiation, in morphogenesis control. This Corynebacterium urealyticum (strain ATCC 43042 / DSM 7109) protein is GTPase Obg.